We begin with the raw amino-acid sequence, 596 residues long: Transketolase-like protein 1 (596 aa).

His-46 contacts substrate. Residues Ser-49 and 94–96 (GWL) each bind thiamine diphosphate. Asp-126 contacts Mg(2+). The thiamine diphosphate site is built by Gly-127 and Asn-156. Mg(2+) is bound by residues Asn-156 and Leu-158. Positions 218 and 232 each coordinate thiamine diphosphate. His-232, Arg-292, and Ser-319 together coordinate substrate. Residues Glu-340 and Phe-366 each coordinate thiamine diphosphate. Glu-340 serves as the catalytic Proton donor. The substrate site is built by His-390 and Asp-398. Residue Gln-402 participates in thiamine diphosphate binding. Residue Arg-448 participates in substrate binding.

This sequence belongs to the transketolase family. Homodimer. The cofactor is Mg(2+). Ca(2+) serves as cofactor. Requires Mn(2+) as cofactor. Co(2+) is required as a cofactor. It depends on thiamine diphosphate as a cofactor.

It localises to the cytoplasm. The enzyme catalyses D-sedoheptulose 7-phosphate + D-glyceraldehyde 3-phosphate = aldehydo-D-ribose 5-phosphate + D-xylulose 5-phosphate. Functionally, catalyzes the transfer of a two-carbon ketol group from a ketose donor to an aldose acceptor, via a covalent intermediate with the cofactor thiamine pyrophosphate. In Macaca fascicularis (Crab-eating macaque), this protein is Transketolase-like protein 1 (TKTL1).